A 317-amino-acid chain; its full sequence is uncharacterized protein (317 aa).

The Cytoplasmic portion of the chain corresponds to 1 to 13; sequence MKRVTGVFLTLLR. Residues 14–34 traverse the membrane as a helical segment; that stretch reads FSQFASSVLVMSLLAYAIHAY. Residues 35-49 are Extracellular-facing; it reads GNRGNKKTNFTLATG. Residue asparagine 43 is glycosylated (N-linked (GlcNAc...) asparagine). A helical transmembrane segment spans residues 50–70; sequence VISVFYLIALGILCLALPTLI. Residue tyrosine 71 is a topological domain, cytoplasmic. Residues 72–92 traverse the membrane as a helical segment; that stretch reads IGMYFCAELIVCMLWLAAFVV. Over 93–133 the chain is Extracellular; that stretch reads LAKAQGERSCSNTNADGLYYNPYSGQYTADSHRRACNSSQA. N-linked (GlcNAc...) asparagine glycosylation occurs at asparagine 129. A helical membrane pass occupies residues 134 to 154; it reads AIAFSGLCFVLFLISVILLGI. Residues 155–317 are Cytoplasmic-facing; sequence NVLTPIRKRY…EPNRNVNQMP (163 aa). The tract at residues 204 to 317 is disordered; sequence RTGDVEAGAG…EPNRNVNQMP (114 aa). Residues 239 to 250 are compositionally biased toward low complexity; the sequence is TTTTNTRYTTTT. Positions 256–282 are enriched in polar residues; the sequence is RYTTNDRNPGSANVANSAVDQHAYSTD. Over residues 284-295 the composition is skewed to basic and acidic residues; the sequence is SGDRSYQEKVTE. Polar residues predominate over residues 302–317; it reads MSGSTAEPNRNVNQMP.

The protein resides in the membrane. This is an uncharacterized protein from Saccharomyces cerevisiae (strain ATCC 204508 / S288c) (Baker's yeast).